The following is a 553-amino-acid chain: LIM domain-containing protein B (553 aa).

The tract at residues 43-115 (LTYKDPNVST…SINNNISNNN (73 aa)) is disordered. The span at 99 to 114 (GPGLPNNSINNNISNN) shows a compositional bias: low complexity. LIM zinc-binding domains lie at 205-262 (PICG…ELFS), 263-322 (PRCF…RQKR), 328-387 (EICS…KQIL), 388-447 (NICG…FFGR), and 448-505 (QCFK…LPKE). Positions 534 to 553 (ELKKERERAAKEKEKESKAK) are disordered.

Its subcellular location is the cytoplasm. It localises to the cell cortex. The protein resides in the cytoskeleton. In terms of biological role, regulates and controls rearrangements of the actin cytoskeleton. Required for tip formation, morphogenesis, cell adhesion and motility, chemotaxis and aggregates formation. May function downstream of paxB. The protein is LIM domain-containing protein B (limB) of Dictyostelium discoideum (Social amoeba).